We begin with the raw amino-acid sequence, 190 residues long: MRAFKVTRDTNETKIHLELNIDGTGKYAIKTGIAFFDHVLSSFAKHGAFDLKLDVLGDLEIDDHHTVEDVGIVLGKAFENMEKKNIKRFGWAIIPMDEAKATVSIDIGGRPYVVGNYTPNTEKIGNFSTENVVHFFESFSNNAKINLHFEVTGENEHHKVEALFKAFGVAMDMATHVDERKGIVSTKGVI.

It belongs to the imidazoleglycerol-phosphate dehydratase family.

The protein localises to the cytoplasm. The enzyme catalyses D-erythro-1-(imidazol-4-yl)glycerol 3-phosphate = 3-(imidazol-4-yl)-2-oxopropyl phosphate + H2O. It functions in the pathway amino-acid biosynthesis; L-histidine biosynthesis; L-histidine from 5-phospho-alpha-D-ribose 1-diphosphate: step 6/9. This chain is Imidazoleglycerol-phosphate dehydratase, found in Methanococcus maripaludis (strain C5 / ATCC BAA-1333).